The primary structure comprises 374 residues: Pectate lyase 1 (374 aa).

An N-terminal signal peptide occupies residues 1 to 21 (MDSPCLVALLVFSFVIGSCFS). Disulfide bonds link cysteine 28-cysteine 45 and cysteine 128-cysteine 147. Residue asparagine 158 is glycosylated (N-linked (GlcNAc...) asparagine). Residue aspartate 170 participates in Ca(2+) binding. N-linked (GlcNAc...) (complex) asparagine glycosylation occurs at asparagine 191. Residues aspartate 194 and aspartate 198 each contribute to the Ca(2+) site. Arginine 250 is an active-site residue. Asparagine 293 is a glycosylation site (N-linked (GlcNAc...) asparagine). A disulfide bridge links cysteine 306 with cysteine 312. Asparagine 354 carries N-linked (GlcNAc...) (complex) asparagine glycosylation.

Belongs to the polysaccharide lyase 1 family. Amb a subfamily. The cofactor is Ca(2+). N-glycosylated; contains fucose and xylose.

The enzyme catalyses Eliminative cleavage of (1-&gt;4)-alpha-D-galacturonan to give oligosaccharides with 4-deoxy-alpha-D-galact-4-enuronosyl groups at their non-reducing ends.. Its pathway is glycan metabolism; pectin degradation; 2-dehydro-3-deoxy-D-gluconate from pectin: step 2/5. Has pectate lyase activity. This Cryptomeria japonica (Japanese cedar) protein is Pectate lyase 1.